Consider the following 84-residue polypeptide: Toxin Ts4 (84 aa).

An N-terminal signal peptide occupies residues 1–19 (MKRMILFISCLLLIDIVVG). Residues 21–82 (REGYPADSKG…IWTSETNKCG (62 aa)) form the LCN-type CS-alpha/beta domain. 4 disulfide bridges follow: C31-C81, C35-C57, C43-C62, and C47-C64. C81 bears the Cysteine amide mark. A propeptide spanning residues 82–84 (GKK) is cleaved from the precursor.

This sequence belongs to the long (4 C-C) scorpion toxin superfamily. Sodium channel inhibitor family. Alpha subfamily. Expressed by the venom gland.

The protein resides in the secreted. Its function is as follows. Not toxic. Induces an immune response similar to that induced by whole venom. Induces a dose dependent release of the neurotransmitters glutamic acid and gamma aminobutyric acid from rat brain synaptosomes. Thus, polyclonal antibodies raised against this protein can neutralize the effects of the venom. The sequence is that of Toxin Ts4 from Tityus serrulatus (Brazilian scorpion).